Here is a 173-residue protein sequence, read N- to C-terminus: CASP-like protein 2D1 (173 aa).

At 1 to 9 (MAPLLKLLD) the chain is on the cytoplasmic side. A helical membrane pass occupies residues 10-29 (SSLRVSVIPLSAATIWLTVT). Over 30–50 (NHQDNSSYGNLKYSNIMGLKY) the chain is Extracellular. N-linked (GlcNAc...) asparagine glycosylation occurs at asparagine 34. The chain crosses the membrane as a helical span at residues 51 to 71 (MVCISAICASYAFVAAVSIWI). Over 72-86 (KCLVNKVWLFFVSDQ) the chain is Cytoplasmic. Residues 87 to 107 (IIAYLMVTSVAAAMEILYIAY) form a helical membrane-spanning segment. Residues 108–131 (NGDQKVTWSEACTSYGKFCNGMKT) lie on the Extracellular side of the membrane. A helical membrane pass occupies residues 132 to 152 (ALILHALTLCFFIVLAVISAY). At 153–173 (RAFSMYQPPVSSKETVEGDAT) the chain is on the cytoplasmic side.

Belongs to the Casparian strip membrane proteins (CASP) family. In terms of assembly, homodimer and heterodimers.

It localises to the cell membrane. The sequence is that of CASP-like protein 2D1 from Ricinus communis (Castor bean).